Consider the following 261-residue polypeptide: 22 kDa alpha-zein 8b (261 aa).

Residues 1 to 16 (LALLALLALFVSATNA) form the signal peptide.

Belongs to the zein family.

Zeins are major seed storage proteins. The protein is 22 kDa alpha-zein 8b of Zea mays (Maize).